Here is a 107-residue protein sequence, read N- to C-terminus: Iron-sulfur cluster assembly protein CyaY (107 aa).

Belongs to the frataxin family.

Involved in iron-sulfur (Fe-S) cluster assembly. May act as a regulator of Fe-S biogenesis. The sequence is that of Iron-sulfur cluster assembly protein CyaY from Edwardsiella ictaluri (strain 93-146).